Here is a 280-residue protein sequence, read N- to C-terminus: Eukaryotic translation initiation factor 3 subunit F-1 (280 aa).

The MPN domain maps to 8-138; sequence VRVHPVVLFQ…LRAYVCIQLG (131 aa).

It belongs to the eIF-3 subunit F family. As to quaternary structure, component of the eukaryotic translation initiation factor 3 (eIF-3) complex. The eIF-3 complex interacts with pix.

It is found in the cytoplasm. Functionally, component of the eukaryotic translation initiation factor 3 (eIF-3) complex, which is involved in protein synthesis of a specialized repertoire of mRNAs and, together with other initiation factors, stimulates binding of mRNA and methionyl-tRNAi to the 40S ribosome. The eIF-3 complex specifically targets and initiates translation of a subset of mRNAs involved in cell proliferation. The protein is Eukaryotic translation initiation factor 3 subunit F-1 of Drosophila erecta (Fruit fly).